Here is a 98-residue protein sequence, read N- to C-terminus: Small ribosomal subunit protein uS19 (98 aa).

The segment at 77–98 (TRTYRGHAGGKSEKGGSAPRKK) is disordered.

This sequence belongs to the universal ribosomal protein uS19 family.

Its function is as follows. Protein S19 forms a complex with S13 that binds strongly to the 16S ribosomal RNA. The sequence is that of Small ribosomal subunit protein uS19 from Chlorobium phaeobacteroides (strain BS1).